A 1080-amino-acid chain; its full sequence is Ubiquitin carboxyl-terminal hydrolase 8 (1080 aa).

In terms of domain architecture, MIT spans 33–116 (TKNYIHSAQK…ESLKLRYEEA (84 aa)). A compositionally biased stretch (basic and acidic residues) spans 119–173 (RKQLEEKDRREEEQLQQQKRQEMGREDSGAAAKRSVENLLDSKTKTQRINGEKSE). The segment at 119 to 176 (RKQLEEKDRREEEQLQQQKRQEMGREDSGAAAKRSVENLLDSKTKTQRINGEKSEGAA) is disordered. Ser-160 bears the Phosphoserine mark. The Rhodanese domain occupies 195–313 (KNTSLIIMDA…WLLCYPQFTT (119 aa)). Positions 379–393 (ALAGPGAAPRAEASP) are enriched in low complexity. Disordered stretches follow at residues 379 to 455 (ALAG…TDEE), 468 to 605 (EKNK…RSEE), and 642 to 710 (PPEM…KPPC). Ser-392 bears the Phosphoserine mark. An SH3-binding motif is present at residues 405–413 (PQVDRTKKP). The span at 417–427 (LPEDHRIKSEN) shows a compositional bias: basic and acidic residues. Ser-446 is subject to Phosphoserine. Basic and acidic residues-rich tracts occupy residues 468-535 (EKNK…RELS), 549-577 (SKSE…KRPA), and 593-605 (AQRE…RSEE). At Thr-569 the chain carries Phosphothreonine. A compositionally biased stretch (polar residues) spans 678-688 (SYSSPDITQAL). Residues Ser-680 and Ser-681 each carry the phosphoserine modification. One can recognise a USP domain in the interval 739–1071 (TGLRNLGNTC…AAYILFYTSL (333 aa)). The Nucleophile role is filled by Cys-748. Position 907 is a phosphothreonine (Thr-907). His-1029 (proton acceptor) is an active-site residue.

Belongs to the peptidase C19 family. As to quaternary structure, forms a ternary complex with RNF128 and OTUB1. Interacts (via C-terminal UCH catalytic domain) with OTUB1 isoform 1. Interacts with STAM2 (via SH3 domain). Interacts with DNAJB3, EGFR, EPS15, RASGRF1, RNF41, YWHAE, YWHAG and YWHAZ. Interacts with NBR1, RASGRF1, RNF41 and IST1. Associates with the ESCRT-0 complex and with microtubules. Interacts with BIRC6/bruce and KIF23/MKLP1. In terms of processing, phosphorylation of Ser-680 is essential for interaction with YWHAE and for cytosol localization. Undergoes dephosphorylation at Ser-680 in the M phase. Tyrosine-phosphorylated in its N-terminal half in an EGFR-dependent manner. Post-translationally, ubiquitinated. Inactive form is mostly monoubiquitinated, but polyubiquitination happens too. Ubiquitination is increased in EGF-stimulated cells. Ubiquitination of active form is undetectable, suggesting a possibility that USP8 deubiquitinates itself, thereby regulating its own function. Highly expressed in testis. Expressed at intermediate level in brain.

The protein resides in the cytoplasm. The protein localises to the nucleus. Its subcellular location is the endosome membrane. It is found in the cell membrane. It carries out the reaction Thiol-dependent hydrolysis of ester, thioester, amide, peptide and isopeptide bonds formed by the C-terminal Gly of ubiquitin (a 76-residue protein attached to proteins as an intracellular targeting signal).. Its function is as follows. Hydrolase that can remove conjugated ubiquitin from proteins and therefore plays an important regulatory role at the level of protein turnover by preventing degradation. Converts both 'Lys-48' an 'Lys-63'-linked ubiquitin chains. Catalytic activity is enhanced in the M phase. Involved in cell proliferation. Required to enter into S phase in response to serum stimulation. May regulate T-cell anergy mediated by RNF128 via the formation of a complex containing RNF128 and OTUB1. Probably regulates the stability of STAM2 and RASGRF1. Regulates endosomal ubiquitin dynamics, cargo sorting, membrane traffic at early endosomes, and maintenance of ESCRT-0 stability. The level of protein ubiquitination on endosomes is essential for maintaining the morphology of the organelle. Deubiquitinates EPS15 and controls tyrosine kinase stability. Removes conjugated ubiquitin from EGFR thus regulating EGFR degradation and downstream MAPK signaling. Involved in acrosome biogenesis through interaction with the spermatid ESCRT-0 complex and microtubules. Deubiquitinates BIRC6/bruce and KIF23/MKLP1. Deubiquitinates BACE1 which inhibits BACE1 lysosomal degradation and modulates BACE-mediated APP cleavage and amyloid-beta formation. The polypeptide is Ubiquitin carboxyl-terminal hydrolase 8 (Mus musculus (Mouse)).